The sequence spans 1156 residues: MGNLLSKFRPGCRRRPLPGPGRGAPAPLSRDASPPGRAHSVPTPRPFRGLFRRNARRRPSAASIFVAPKRPCPLPRAAAAPLGVLPAVGWGLAIRKTPMLPARNPPRFGHPSSVRIPPPSRMFTLLLPSPREPAVKARKPIPATLLEETEVWAQEGPRRVKKDEDPVQIEGEDDEKRTPLSSGEASSTSRSQGTQGDVASFRCSPGPLEGNVYHKFSENSMSEKAQASPASSCLEGPAMPSTHSQAGCARHLGKPDPDATAPPEPAVGCSLLQQKLAAEVLNEEPPPSSLGLPIPLMSGKRMPDEKPFCIPPRSAAPPRAARNRPCKRKMSIPLLLPLPPSLPLLWDRGELPPPAKLPCLSVEGDLHTLEKSPEYKRNSRILEDKTETMTNSSITQPAPSFSQPVQTTDSLPLTTYTSQVSAPLPIPDLADLATGPLILPIPPLSTTPKMDEKIAFTIPNSPLALPADLVPILGDQSNEKGGSYNSVVGAAPLTSDPPTPPSSTPSFKPPVTRESPISMCVDSPPPLSFLTLLPVPSTGTSVITSKPMNSTSVISTVTTNASAHLTSQTAVDPEVVNMDTTAPSQVVIFTSSLSSRVSSLPNSQIHCSAEQRHPGKTSVYTSPLPFIFHNTTPSFNQLFGKEATPQPKFEAPDGQPQKASLPSACVFLSLPIIPPPDTSTLVNSASTASSSKPPIETNAMHTTPPSKAVILQSASVSKKYLPFYLGLPGSGNTQPSGNTASVQGSTSLPAQSVRAPATASNHPLNPGATPQPKFGAPDGPQQKTSLPSAHDFLSLPIMVPPDTSTLVSSASAASLSKPAIDTSDMNTTPPSKTVILQSTFVSRKEEYIRFYMGLPGSGNTLHSDSIASAQVSTSFPAQADRRPTTTSSHPLNTGSISHSTLGATDGQQKSDSSFILGNPATPAPVIGLTSPSVQPLSGSIIPPGFAELTSPYTALGTPVNAEPVEGHNASAFPNGTAKTSGFRIATGMPGTGDSTLLVGNTIPGPQVIMGPGTPMDGGSIGFSMSAPGPSSTSGELNIGQGQSGTPSTTSVFPFGQAAWDPTGHSMAAAPQGASNIPVFGYTSAAAYIPGLDPPTQNSCSGMGGDGTRSIVGGPCVPAFQQCILQHTWTERKFYTSSTHYYGQETYVRRHVCFQLP.

Disordered stretches follow at residues 1–60 (MGNL…RRPS), 155–204 (EGPR…FRCS), 219–266 (NSMS…PEPA), 481–515 (GGSY…TRES), 680–703 (TLVN…MHTT), 732–786 (NTQP…KTSL), 872–915 (STSF…SSFI), and 1026–1046 (APGP…SGTP). The span at 50-59 (LFRRNARRRP) shows a compositional bias: basic residues. Positions 156–165 (GPRRVKKDED) are enriched in basic and acidic residues. Polar residues-rich tracts occupy residues 179-197 (PLSS…TQGD) and 219-231 (NSMS…SPAS). Composition is skewed to polar residues over residues 680–692 (TLVN…SSSK), 732–750 (NTQP…SLPA), 884–915 (TTTS…SSFI), and 1028–1046 (GPSS…SGTP).

Associates with the nuclear pore complex (NPC). As to expression, testis-specific in adults. In fetal brain expressed only from the paternal allele.

It is found in the nucleus. The protein resides in the nucleoplasm. Its subcellular location is the nucleus inner membrane. In terms of biological role, may be involved in spermatogenesis. In Homo sapiens (Human), this protein is Nuclear pore-associated protein 1 (NPAP1).